The primary structure comprises 326 residues: Phospho-N-acetylmuramoyl-pentapeptide-transferase (326 aa).

9 helical membrane-spanning segments follow: residues 3 to 23, 51 to 71, 79 to 99, 115 to 135, 138 to 158, 169 to 189, 195 to 215, 221 to 243, and 306 to 326; these read ISIS…PAFI, TMGG…FALF, VGMI…DDFL, LALQ…GGDI, VFGY…FWLV, GVDG…GVIA, MDIL…FIFN, VFMG…MALH, and FFFW…LYLM.

Belongs to the glycosyltransferase 4 family. MraY subfamily. Mg(2+) is required as a cofactor.

It localises to the cell membrane. It catalyses the reaction UDP-N-acetyl-alpha-D-muramoyl-L-alanyl-gamma-D-glutamyl-L-lysyl-D-alanyl-D-alanine + di-trans,octa-cis-undecaprenyl phosphate = Mur2Ac(oyl-L-Ala-gamma-D-Glu-L-Lys-D-Ala-D-Ala)-di-trans,octa-cis-undecaprenyl diphosphate + UMP. It functions in the pathway cell wall biogenesis; peptidoglycan biosynthesis. Functionally, catalyzes the initial step of the lipid cycle reactions in the biosynthesis of the cell wall peptidoglycan: transfers peptidoglycan precursor phospho-MurNAc-pentapeptide from UDP-MurNAc-pentapeptide onto the lipid carrier undecaprenyl phosphate, yielding undecaprenyl-pyrophosphoryl-MurNAc-pentapeptide, known as lipid I. The protein is Phospho-N-acetylmuramoyl-pentapeptide-transferase of Streptococcus pneumoniae (strain 70585).